Reading from the N-terminus, the 605-residue chain is Alpha-1,3-galactosidase A (605 aa).

Residues 1–20 form the signal peptide; that stretch reads MKKYLHILPACFLFYAAAHA. PbH1 repeat units lie at residues 256–278, 312–334, 421–443, 444–466, 477–507, and 517–547; these read SKNITLSRLQMHYMHGLGIVSQY, KGKVIIDSCYFAGAQDDPVNVHG, TPEVEIRNSYFTRTSTRGTLVTT, PRKVVIENNTYYKTGMSAILIEA, VKDVLIKGNTFIDCAYNGGPGHAVIAIHPSN, and HQNIRIEDNTFRTFDYPVLYAKSTAGLLFRN.

This sequence belongs to the glycosyl hydrolase 110 family. A subfamily.

It catalyses the reaction Hydrolysis of terminal, non-reducing branched (1-&gt;3)-alpha-D-galactosidic residues, producing free D-galactose.. It carries out the reaction Hydrolysis of terminal, non-reducing alpha-D-galactose residues in alpha-D-galactosides, including galactose oligosaccharides, galactomannans and galactolipids.. Alpha-galactosidase that specifically removes branched alpha-1,3-linked galactose residues present in blood group B antigens. Has no activity toward linear alpha-1,3-linked galactose residues. The sequence is that of Alpha-1,3-galactosidase A (glaA) from Bacteroides fragilis (strain YCH46).